We begin with the raw amino-acid sequence, 348 residues long: Neutral peroxidase (348 aa).

Positions Met1 to Ala20 are cleaved as a signal peptide. A propeptide spanning residues Gly21 to Ser67 is cleaved from the precursor. Disulfide bonds link Cys71/Cys149, Cys102/Cys107, Cys156/Cys344, and Cys235/Cys256. His100 acts as the Proton acceptor in catalysis. Ca(2+) contacts are provided by Asp101, Val104, Gly106, and Asp108. 5 N-linked (GlcNAc...) asparagine glycosylation sites follow: Asn114, Asn118, Asn173, Asn177, and Asn189. Pro198 contacts substrate. A glycan (N-linked (GlcNAc...) asparagine) is linked at Asn203. A heme b-binding site is contributed by His228. A Ca(2+)-binding site is contributed by Thr229. Residues Asn247 and Asn261 are each glycosylated (N-linked (GlcNAc...) asparagine). Residues Asp269, Ser271, and Asp276 each contribute to the Ca(2+) site. Asn300 carries an N-linked (GlcNAc...) asparagine glycan.

The protein belongs to the peroxidase family. Classical plant (class III) peroxidase subfamily. Requires Ca(2+) as cofactor. Heme b is required as a cofactor. In terms of tissue distribution, highly expressed in suspension cultured cells. Weak expression also found in the stems of intact plants. No expression in leaf, tuberous root and non-tuberous root.

It is found in the secreted. The catalysed reaction is 2 a phenolic donor + H2O2 = 2 a phenolic radical donor + 2 H2O. Functionally, removal of H(2)O(2), oxidation of toxic reductants, biosynthesis and degradation of lignin, suberization, auxin catabolism, response to environmental stresses such as wounding, pathogen attack and oxidative stress. These functions might be dependent on each isozyme/isoform in each plant tissue. Its function is as follows. May contribute to protection against cold-induced oxidative stress. The polypeptide is Neutral peroxidase (Ipomoea batatas (Sweet potato)).